The primary structure comprises 147 residues: MKLFELKPAPGAKKRPKRVGRGESSGHGKTSTRGHKGQWARSGGGVRPGFEGGQMPLTRRIPKRGFKNINKKVYTEVNVEKLERFENDTVITPELLLKEGVISKIEKDGVKVLGRGDLTKRLIVRVQKVSEGARKKIEAVGGKVEVI.

The disordered stretch occupies residues 1–58 (MKLFELKPAPGAKKRPKRVGRGESSGHGKTSTRGHKGQWARSGGGVRPGFEGGQMPLT). Over residues 42-52 (SGGGVRPGFEG) the composition is skewed to gly residues.

This sequence belongs to the universal ribosomal protein uL15 family. Part of the 50S ribosomal subunit.

In terms of biological role, binds to the 23S rRNA. The sequence is that of Large ribosomal subunit protein uL15 from Caldicellulosiruptor saccharolyticus (strain ATCC 43494 / DSM 8903 / Tp8T 6331).